A 241-amino-acid chain; its full sequence is Interleukin-6 (241 aa).

The segment at 1 to 25 (MNFTEGCEATGRRPGSAGSRRRRAP) is disordered. An N-terminal signal peptide occupies residues 1–46 (MNFTEGCEATGRRPGSAGSRRRRAPRPGPVALLPLLLPLLLPPAAA). A disulfide bond links C122 and C132.

Belongs to the IL-6 superfamily. In terms of assembly, component of a hexamer of two molecules each of IL6, IL6R and IL6ST; first binds to IL6R to associate with the signaling subunit IL6ST.

It localises to the secreted. Cytokine with a wide variety of biological functions in immunity, tissue regeneration, and metabolism. Binds to IL6R, then the complex associates to the signaling subunit IL6ST/gp130 to trigger the intracellular IL6-signaling pathway. The interaction with the membrane-bound IL6R and IL6ST stimulates 'classic signaling', whereas the binding of IL6 and soluble IL6R to IL6ST stimulates 'trans-signaling'. Alternatively, 'cluster signaling' occurs when membrane-bound IL6:IL6R complexes on transmitter cells activate IL6ST receptors on neighboring receiver cells. This chain is Interleukin-6 (IL6), found in Gallus gallus (Chicken).